Reading from the N-terminus, the 67-residue chain is Beta-defensin 103A (67 aa).

Residues 1 to 22 (MRIHYLLFALLFLFLVPVPGHG) form the signal peptide. 3 cysteine pairs are disulfide-bonded: C33–C62, C40–C55, and C45–C63.

This sequence belongs to the beta-defensin family.

Its subcellular location is the secreted. Its function is as follows. Exhibits antimicrobial activity against Gram-positive and Gram-negative bacteria. This chain is Beta-defensin 103A (DEFB103A), found in Pan troglodytes (Chimpanzee).